A 344-amino-acid polypeptide reads, in one-letter code: uncharacterized protein (344 aa).

Belongs to the glycosyltransferase 2 family.

This is an uncharacterized protein from Escherichia coli (strain K12).